The sequence spans 33 residues: Dermaseptin-J7 (33 aa).

Residue V33 is modified to Valine amide.

As to expression, expressed by the skin glands.

The protein localises to the secreted. Its function is as follows. Has antimicrobial activity. The chain is Dermaseptin-J7 from Phasmahyla jandaia (Jandaia leaf frog).